The primary structure comprises 251 residues: Electron transfer flavoprotein subunit beta, mitochondrial (251 aa).

The protein belongs to the ETF beta-subunit/FixA family. As to quaternary structure, heterodimer of an alpha and a beta subunit. Requires FAD as cofactor. The cofactor is AMP.

It localises to the mitochondrion matrix. Functionally, the electron transfer flavoprotein serves as a specific electron acceptor for several dehydrogenases, including five acyl-CoA dehydrogenases, glutaryl-CoA and sarcosine dehydrogenase. It transfers the electrons to the main mitochondrial respiratory chain via ETF-ubiquinone oxidoreductase (ETF dehydrogenase). Involved in leucine catabolism and in phytol degradation. The polypeptide is Electron transfer flavoprotein subunit beta, mitochondrial (ETFB) (Arabidopsis thaliana (Mouse-ear cress)).